We begin with the raw amino-acid sequence, 291 residues long: Protease HtpX homolog (291 aa).

2 consecutive transmembrane segments (helical) span residues Val-4–Ile-24 and Met-38–Leu-58. His-144 serves as a coordination point for Zn(2+). The active site involves Glu-145. Position 148 (His-148) interacts with Zn(2+). The next 2 helical transmembrane spans lie at Gly-152–Ser-172 and Ile-199–Phe-219. A Zn(2+)-binding site is contributed by Glu-224.

Belongs to the peptidase M48B family. Zn(2+) serves as cofactor.

It localises to the cell inner membrane. This is Protease HtpX homolog from Chlorobium limicola (strain DSM 245 / NBRC 103803 / 6330).